We begin with the raw amino-acid sequence, 274 residues long: NADPH-dependent 7-cyano-7-deazaguanine reductase (274 aa).

80–82 (VES) is a substrate binding site. 82 to 83 (SK) contacts NADPH. Catalysis depends on C181, which acts as the Thioimide intermediate. Residue D188 is the Proton donor of the active site. 220 to 221 (HE) contacts substrate. 249–250 (RG) contributes to the NADPH binding site.

The protein belongs to the GTP cyclohydrolase I family. QueF type 2 subfamily. In terms of assembly, homodimer.

The protein resides in the cytoplasm. It carries out the reaction 7-aminomethyl-7-carbaguanine + 2 NADP(+) = 7-cyano-7-deazaguanine + 2 NADPH + 3 H(+). The protein operates within tRNA modification; tRNA-queuosine biosynthesis. Functionally, catalyzes the NADPH-dependent reduction of 7-cyano-7-deazaguanine (preQ0) to 7-aminomethyl-7-deazaguanine (preQ1). The chain is NADPH-dependent 7-cyano-7-deazaguanine reductase from Burkholderia thailandensis (strain ATCC 700388 / DSM 13276 / CCUG 48851 / CIP 106301 / E264).